The following is a 254-amino-acid chain: Pyrroloquinoline-quinone synthase (254 aa).

Belongs to the PqqC family.

The catalysed reaction is 6-(2-amino-2-carboxyethyl)-7,8-dioxo-1,2,3,4,7,8-hexahydroquinoline-2,4-dicarboxylate + 3 O2 = pyrroloquinoline quinone + 2 H2O2 + 2 H2O + H(+). Its pathway is cofactor biosynthesis; pyrroloquinoline quinone biosynthesis. Its function is as follows. Ring cyclization and eight-electron oxidation of 3a-(2-amino-2-carboxyethyl)-4,5-dioxo-4,5,6,7,8,9-hexahydroquinoline-7,9-dicarboxylic-acid to PQQ. This chain is Pyrroloquinoline-quinone synthase, found in Rhodopseudomonas palustris (strain ATCC BAA-98 / CGA009).